The primary structure comprises 437 residues: UDP-N-acetylmuramoylalanine--D-glutamate ligase (437 aa).

112 to 118 (GSNGKST) serves as a coordination point for ATP.

It belongs to the MurCDEF family.

The protein localises to the cytoplasm. The catalysed reaction is UDP-N-acetyl-alpha-D-muramoyl-L-alanine + D-glutamate + ATP = UDP-N-acetyl-alpha-D-muramoyl-L-alanyl-D-glutamate + ADP + phosphate + H(+). It functions in the pathway cell wall biogenesis; peptidoglycan biosynthesis. In terms of biological role, cell wall formation. Catalyzes the addition of glutamate to the nucleotide precursor UDP-N-acetylmuramoyl-L-alanine (UMA). The chain is UDP-N-acetylmuramoylalanine--D-glutamate ligase from Haemophilus influenzae (strain PittGG).